We begin with the raw amino-acid sequence, 522 residues long: MKFELNGKIIFSKEITDDAKKDIIEVLNDRTILLKGVPTGKEEEASKIVNYEFKGNELILNIISGTYARAHEAIIRLKKPIMEKVGKIHKMGIRDIKIDNYEITINAPHNIDALENLKVPECETELNEEENTIKIIFKNIGDSELKRNIVDRAIKFVKTEIDNIGDSGEECDLTYEVCGIAPNTIVSEYKAERTISYNKDPTEESEKLGWVKRFSGKGQWFYTPPMTKLLRAFEELLMEECINKIGFDECLFPKLIPLEVMYKMRYLEGLPEGMYYVSPPKRDPEMFKEFVNEMMIKNEIPIHKLKDLLRNPGYVLAPAQCEPFYQFFDHELVDIDNPVKFVDKSGWTYRWEGGGSKGLDRVHEFLRIETVQMGAPEFVNSVRDDTLKYAEKLAEKLDLEYWTEVGDDPFYLEGRKKEERNIEFPEVPKYEMRLWLPHVKDERKGVAVTSANVHGTHFVEGFGVKDYKNRTVWTGCTGFGLSRWVIGFLAQYGFDYNDWPELIKDKIGEMPNIPKVITWPKK.

Residue Ala319 coordinates L-serine. A Zn(2+)-binding site is contributed by Cys321. Residue Arg350 coordinates L-serine. ATP-binding positions include 350-352 and 361-362; these read RWE and RV. 367–369 contributes to the L-serine binding site; the sequence is RIE. The Zn(2+) site is built by Glu369 and Cys476. Arg483 contacts ATP.

This sequence belongs to the class-II aminoacyl-tRNA synthetase family. Type-2 seryl-tRNA synthetase subfamily. Homodimer. The cofactor is Zn(2+).

It is found in the cytoplasm. It carries out the reaction tRNA(Ser) + L-serine + ATP = L-seryl-tRNA(Ser) + AMP + diphosphate + H(+). The catalysed reaction is tRNA(Sec) + L-serine + ATP = L-seryl-tRNA(Sec) + AMP + diphosphate + H(+). It participates in aminoacyl-tRNA biosynthesis; selenocysteinyl-tRNA(Sec) biosynthesis; L-seryl-tRNA(Sec) from L-serine and tRNA(Sec): step 1/1. Functionally, catalyzes the attachment of serine to tRNA(Ser). Is also able to aminoacylate tRNA(Sec) with serine, to form the misacylated tRNA L-seryl-tRNA(Sec), which will be further converted into selenocysteinyl-tRNA(Sec). This Methanococcus aeolicus (strain ATCC BAA-1280 / DSM 17508 / OCM 812 / Nankai-3) protein is Type-2 serine--tRNA ligase (serS).